We begin with the raw amino-acid sequence, 286 residues long: Pantothenate synthetase (286 aa).

30 to 37 (MGALHEGH) provides a ligand contact to ATP. The Proton donor role is filled by His37. Residue Gln61 coordinates (R)-pantoate. Beta-alanine is bound at residue Gln61. 147 to 150 (GEKD) provides a ligand contact to ATP. Gln153 serves as a coordination point for (R)-pantoate. ATP-binding positions include Leu176 and 184-187 (HSSR).

The protein belongs to the pantothenate synthetase family. As to quaternary structure, homodimer.

It localises to the cytoplasm. The catalysed reaction is (R)-pantoate + beta-alanine + ATP = (R)-pantothenate + AMP + diphosphate + H(+). The protein operates within cofactor biosynthesis; (R)-pantothenate biosynthesis; (R)-pantothenate from (R)-pantoate and beta-alanine: step 1/1. Its function is as follows. Catalyzes the condensation of pantoate with beta-alanine in an ATP-dependent reaction via a pantoyl-adenylate intermediate. This is Pantothenate synthetase from Bartonella tribocorum (strain CIP 105476 / IBS 506).